The primary structure comprises 412 residues: MSSKGSVVLAYSGGLDTSCILVWLKEQGYDVIAYLANIGQKEDFEEARKKALKLGAKKVFIEDVSKEFVEEFIWPAVQSSALYEDRYLLGTSLARPCIARKQVEIAQREGAKYVSHGATGKGNDQVRFELTCYSLAPQIKVIAPWRMPEFYNRFKGRNDLMEYAKQHGIPIPVTPKSPWSMDENLMHISYEAGILENPKNQAPPGLYTKTQDPAKAPNTPDVLEIEFKKGVPVKVTNVKDGTTHSTSLDLFMYLNEVAGKHGVGRIDIVENRFIGMKSRGIYETPAGTILYHAHLDIEAFTMDREVRKIKQGLGLKFAELVYTGFWHSPECEFVRHCIDKSQERVEGKVQVSVFKGQVYILGRESPLSLYNEELVSMNVQGDYEPIDATGFININSLRLKEYHRLQSKVTAK.

Residues Ala-10–Ser-18 and Ala-36 contribute to the ATP site. Positions 87 and 92 each coordinate L-citrulline. Residue Tyr-87 is modified to Phosphotyrosine. At Lys-112 the chain carries N6-acetyllysine. Tyr-113 is modified (phosphotyrosine). Ser-115–Asn-123 lines the ATP pocket. The L-aspartate site is built by Thr-119, Asn-123, and Asp-124. Asn-123 lines the L-citrulline pocket. Arg-127 lines the L-citrulline pocket. N6-acetyllysine; by CLOCK is present on residues Lys-165 and Lys-176. Residues Ser-177 and Ser-180 each carry the phosphoserine modification. L-citrulline is bound by residues Ser-180 and Ser-189. Thr-219 carries the post-translational modification Phosphothreonine. The L-citrulline site is built by Glu-270 and Tyr-282.

This sequence belongs to the argininosuccinate synthase family. Type 1 subfamily. In terms of assembly, homotetramer. Interacts with NMRAL1. Interacts with CLOCK; in a circadian manner. Forms tissue-specific complexes with ASL, SLC7A1, HSP90AA1 and nitric oxide synthase NOS1, NOS2 or NOS3; the complex regulates cell-autonomous L-arginine synthesis and citrulline recycling while channeling extracellular L-arginine to nitric oxide synthesis pathway. Acetylated by CLOCK in a circadian manner which negatively regulates its enzyme activity. Deacetylated by histone deacetylases.

The protein localises to the cytoplasm. Its subcellular location is the cytosol. The catalysed reaction is L-citrulline + L-aspartate + ATP = 2-(N(omega)-L-arginino)succinate + AMP + diphosphate + H(+). It functions in the pathway amino-acid biosynthesis; L-arginine biosynthesis; L-arginine from L-ornithine and carbamoyl phosphate: step 2/3. The protein operates within nitrogen metabolism; urea cycle; (N(omega)-L-arginino)succinate from L-aspartate and L-citrulline: step 1/1. Its function is as follows. One of the enzymes of the urea cycle, the metabolic pathway transforming neurotoxic amonia produced by protein catabolism into inocuous urea in the liver of ureotelic animals. Catalyzes the formation of arginosuccinate from aspartate, citrulline and ATP and together with ASL it is responsible for the biosynthesis of arginine in most body tissues. Indirectly, may be involved in the control of blood pressure. This Rattus norvegicus (Rat) protein is Argininosuccinate synthase.